A 198-amino-acid chain; its full sequence is MEKNYMTIPYVIEQTSRGERSYDIYSRLLKDRIIFLGGEINDDVANVVIAQLLFLESADPEKDISLYINSPGGVVTAALGMYDTMQYVKPDVATLCVGQAASAGALLLAGGAKGKRFATANSRIMIHQPSGGSRGMVTDMEIQLKETIRLKSILNNIMANHTGQDIKKLEADMDRDYFMSAEEAKDYGIIDKVFSSRE.

Ser-102 serves as the catalytic Nucleophile. His-127 is an active-site residue.

Belongs to the peptidase S14 family. As to quaternary structure, fourteen ClpP subunits assemble into 2 heptameric rings which stack back to back to give a disk-like structure with a central cavity, resembling the structure of eukaryotic proteasomes.

The protein localises to the cytoplasm. The enzyme catalyses Hydrolysis of proteins to small peptides in the presence of ATP and magnesium. alpha-casein is the usual test substrate. In the absence of ATP, only oligopeptides shorter than five residues are hydrolyzed (such as succinyl-Leu-Tyr-|-NHMec, and Leu-Tyr-Leu-|-Tyr-Trp, in which cleavage of the -Tyr-|-Leu- and -Tyr-|-Trp bonds also occurs).. Its function is as follows. Cleaves peptides in various proteins in a process that requires ATP hydrolysis. Has a chymotrypsin-like activity. Plays a major role in the degradation of misfolded proteins. The sequence is that of ATP-dependent Clp protease proteolytic subunit from Brachyspira hyodysenteriae (strain ATCC 49526 / WA1).